Consider the following 842-residue polypeptide: ATP-binding cassette sub-family B member 6 (842 aa).

The Lumenal portion of the chain corresponds to 1–26; sequence MVTVGNYCEAEGPLGPAWAQNGLSPC. Residues 1 to 205 form a required for the lysosomal targeting region; it reads MVTVGNYCEA…SGGLFILGLW (205 aa). The required for ATPase activity stretch occupies residues 1-236; it reads MVTVGNYCEA…RNQAQSTDRT (236 aa). A disulfide bridge links C8 with C26. The helical transmembrane segment at 27 to 47 threads the bilayer; it reads FFFTLVPSTLMALGALALVLV. Residues 48-72 lie on the Cytoplasmic side of the membrane; sequence LPCRRRDVPSGTEELFWAADSRVAP. A helical transmembrane segment spans residues 73–93; the sequence is YALQLFLATLQVALPLAGLAG. Topologically, residues 94-106 are lumenal; the sequence is RVGTARGVRLPGY. Residues 107–127 traverse the membrane as a helical segment; that stretch reads LLLASMLGSLASACGLWLLVA. Residues 128–147 lie on the Cytoplasmic side of the membrane; sequence ERRQARQSLAMGVWMKFRHS. The chain crosses the membrane as a helical span at residues 148–168; it reads SGLLLLWTVAFAAENLALVSW. The Lumenal segment spans residues 169–185; sequence NSPQWWWARADLGQQVQ. A helical membrane pass occupies residues 186-206; sequence FGLWVLRYVISGGLFILGLWA. Topologically, residues 207-263 are cytoplasmic; it reads PGLRPQSYTLRVHEADQDVERNQAQSTDRTSTWRDLGRKLRLLSSYLWPRGSPALQF. A helical transmembrane segment spans residues 264–284; sequence IVLICLGLMGLDRALNVLVPI. The ABC transmembrane type-1 domain occupies 265 to 556; it reads VLICLGLMGL…FGTYYRMIQT (292 aa). The Lumenal segment spans residues 285 to 305; sequence FYRDIVNLLTSKAPWSSLAWT. Residues 306 to 326 form a helical membrane-spanning segment; it reads VTTYVFLKFLQGGGTGSTGFV. The Cytoplasmic portion of the chain corresponds to 327-375; it reads SNLRTFLWIRVQQFTSRGVELRLFSHLHELSLRWHLGRRTGEVLRVVDR. The helical transmembrane segment at 376–396 threads the bilayer; the sequence is GTSSVTGLLSYLVFNIIPTLA. Position 397 (D397) is a topological domain, lumenal. The chain crosses the membrane as a helical span at residues 398–418; sequence IIIGIIYFSMFFNAWFGLIVF. Residues 419–499 are Cytoplasmic-facing; the sequence is LCMSLYLFLT…SSASLVVLNQ (81 aa). The helical transmembrane segment at 500–520 threads the bilayer; sequence TQNLVIGLGLLAGSLLCAYFV. Residues 521 to 529 lie on the Lumenal side of the membrane; sequence SEQKLQVGD. The helical transmembrane segment at 530–550 threads the bilayer; it reads FVLFGTYITQLYMPLNWFGTY. Over 551–842 the chain is Cytoplasmic; sequence YRMIQTNFID…SEDSKPQDIA (292 aa). The ABC transporter domain maps to 590-824; sequence IEFENVHFSY…GGVYAEMWQL (235 aa). ATP is bound at residue 623–630; sequence GPSGAGKS.

It belongs to the ABC transporter superfamily. ABCB family. Heavy Metal importer (TC 3.A.1.210) subfamily. Homodimer. In terms of processing, N-glycosylated. In terms of tissue distribution, highly expressed in the liver, adrenal glands, and testis.

The protein resides in the cell membrane. Its subcellular location is the mitochondrion outer membrane. It is found in the endoplasmic reticulum membrane. The protein localises to the golgi apparatus membrane. It localises to the endosome membrane. The protein resides in the lysosome membrane. Its subcellular location is the late endosome membrane. It is found in the early endosome membrane. The protein localises to the secreted. It localises to the extracellular exosome. The protein resides in the mitochondrion. Its subcellular location is the endosome. It is found in the multivesicular body membrane. The protein localises to the melanosome membrane. It carries out the reaction heme b(in) + ATP + H2O = heme b(out) + ADP + phosphate + H(+). It catalyses the reaction coproporphyrin III(in) + ATP + H2O = coproporphyrin III(out) + ADP + phosphate + H(+). The catalysed reaction is pheophorbide a(in) + ATP + H2O = pheophorbide a(out) + ADP + phosphate + H(+). The enzyme catalyses coproporphyrinogen III(in) + ATP + H2O = coproporphyrinogen III(out) + ADP + phosphate + H(+). It carries out the reaction protoporphyrin IX(in) + ATP + H2O = protoporphyrin IX(out) + ADP + phosphate + H(+). It catalyses the reaction coproporphyrin I(in) + ATP + H2O = coproporphyrin I(out) + ADP + phosphate + H(+). The catalysed reaction is uroporphyrin I(in) + ATP + H2O = uroporphyrin I(out) + ADP + phosphate + H(+). The enzyme catalyses uroporphyrin III(in) + ATP + H2O = uroporphyrin III(out) + ADP + phosphate + H(+). In terms of biological role, ATP-dependent transporter that catalyzes the transport of a broad-spectrum of porphyrins from the cytoplasm to the extracellular space through the plasma membrane or into the vesicle lumen. May also function as an ATP-dependent importer of porphyrins from the cytoplasm into the mitochondria, in turn may participate in the de novo heme biosynthesis regulation and in the coordination of heme and iron homeostasis during phenylhydrazine stress. May also play a key role in the early steps of melanogenesis producing PMEL amyloid fibrils. In vitro, it confers to cells a resistance to toxic metal such as arsenic and cadmium and against chemotherapeutics agent such as 5-fluorouracil, SN-38 and vincristin. In addition may play a role in the transition metal homeostasis. The protein is ATP-binding cassette sub-family B member 6 of Mesocricetus auratus (Golden hamster).